A 46-amino-acid chain; its full sequence is Light-harvesting protein B-800/850 beta 1 chain (46 aa).

At 2–19 the chain is on the cytoplasmic side; sequence AERSLSGLTEEEAIAVHD. Residues histidine 18 and histidine 36 each coordinate a bacteriochlorophyll. Residues 20-42 traverse the membrane as a helical segment; that stretch reads QFKTTFSAFIILAAVAHVLVWVW. The Periplasmic portion of the chain corresponds to 43–46; the sequence is KPWF.

It belongs to the antenna complex beta subunit family. The core complex is formed by different alpha and beta chains, binding bacteriochlorophyll molecules, and arranged most probably in tetrameric structures disposed around the reaction center.

It localises to the cell inner membrane. Functionally, antenna complexes are light-harvesting systems, which transfer the excitation energy to the reaction centers. The sequence is that of Light-harvesting protein B-800/850 beta 1 chain (B1) from Magnetospirillum molischianum (Rhodospirillum molischianum).